Here is a 588-residue protein sequence, read N- to C-terminus: 2-isopropylmalate synthase (588 aa).

The 275-residue stretch at 40–314 (PRWCAVDLRD…DPQIDFSDLD (275 aa)) folds into the Pyruvate carboxyltransferase domain. Residues Asp49, His253, His255, and Asn289 each contribute to the Mg(2+) site. Residues 456 to 588 (APLDRVEEKW…TVREPELAAV (133 aa)) form a regulatory domain region.

It belongs to the alpha-IPM synthase/homocitrate synthase family. LeuA type 2 subfamily. Homodimer. The cofactor is Mg(2+).

The protein localises to the cytoplasm. The enzyme catalyses 3-methyl-2-oxobutanoate + acetyl-CoA + H2O = (2S)-2-isopropylmalate + CoA + H(+). It functions in the pathway amino-acid biosynthesis; L-leucine biosynthesis; L-leucine from 3-methyl-2-oxobutanoate: step 1/4. Catalyzes the condensation of the acetyl group of acetyl-CoA with 3-methyl-2-oxobutanoate (2-ketoisovalerate) to form 3-carboxy-3-hydroxy-4-methylpentanoate (2-isopropylmalate). This chain is 2-isopropylmalate synthase, found in Clavibacter sepedonicus (Clavibacter michiganensis subsp. sepedonicus).